A 261-amino-acid chain; its full sequence is Hydroxyethylthiazole kinase (261 aa).

Met-45 lines the substrate pocket. 2 residues coordinate ATP: Arg-121 and Ser-167. A substrate-binding site is contributed by Gly-194.

It belongs to the Thz kinase family. Requires Mg(2+) as cofactor.

The catalysed reaction is 5-(2-hydroxyethyl)-4-methylthiazole + ATP = 4-methyl-5-(2-phosphooxyethyl)-thiazole + ADP + H(+). The protein operates within cofactor biosynthesis; thiamine diphosphate biosynthesis; 4-methyl-5-(2-phosphoethyl)-thiazole from 5-(2-hydroxyethyl)-4-methylthiazole: step 1/1. In terms of biological role, catalyzes the phosphorylation of the hydroxyl group of 4-methyl-5-beta-hydroxyethylthiazole (THZ). This is Hydroxyethylthiazole kinase from Vibrio atlanticus (strain LGP32) (Vibrio splendidus (strain Mel32)).